We begin with the raw amino-acid sequence, 188 residues long: dCTP deaminase (188 aa).

Residues 111–116 (KSTYAR), 135–137 (TLE), glutamine 156, tyrosine 170, and glutamine 180 contribute to the dCTP site. Glutamate 137 acts as the Proton donor/acceptor in catalysis.

The protein belongs to the dCTP deaminase family. Homotrimer.

It catalyses the reaction dCTP + H2O + H(+) = dUTP + NH4(+). It participates in pyrimidine metabolism; dUMP biosynthesis; dUMP from dCTP (dUTP route): step 1/2. Functionally, catalyzes the deamination of dCTP to dUTP. The polypeptide is dCTP deaminase (Pseudomonas syringae pv. tomato (strain ATCC BAA-871 / DC3000)).